The chain runs to 92 residues: Small ribosomal subunit protein uS19 (92 aa).

It belongs to the universal ribosomal protein uS19 family.

Protein S19 forms a complex with S13 that binds strongly to the 16S ribosomal RNA. This Lachnoclostridium phytofermentans (strain ATCC 700394 / DSM 18823 / ISDg) (Clostridium phytofermentans) protein is Small ribosomal subunit protein uS19.